Consider the following 122-residue polypeptide: Large ribosomal subunit protein bL12 (122 aa).

It belongs to the bacterial ribosomal protein bL12 family. As to quaternary structure, homodimer. Part of the ribosomal stalk of the 50S ribosomal subunit. Forms a multimeric L10(L12)X complex, where L10 forms an elongated spine to which 2 to 4 L12 dimers bind in a sequential fashion. Binds GTP-bound translation factors.

Functionally, forms part of the ribosomal stalk which helps the ribosome interact with GTP-bound translation factors. Is thus essential for accurate translation. This Staphylococcus saprophyticus subsp. saprophyticus (strain ATCC 15305 / DSM 20229 / NCIMB 8711 / NCTC 7292 / S-41) protein is Large ribosomal subunit protein bL12.